The chain runs to 314 residues: MDNSNWTSVSHFVLLGISTHPEEQIPLFLVFSLMYAINISGNLAIITLILSAPRLHIPMYIFLSNLALTDICFTSTTVPKMLQIIFSPTKVISYTGCLAQTYFFICFAVMENFILAVMAYDRYIAICHPFHYTMILTRMLCVKMVVMCHALSHLHAMLHTFLIGQLIFCADNRIPHFFCDLYALMKISCTSTYLNTLMIHTEGAVVISGALAFITASYACIILVVLRIPSAKGRWKTFSTCGSHLTVVAIFYGTLSWVYFRPLSSYSVTKGRIITVVYTVVTPMLNPFIYSLRNGDVKGGFMKWMSRMQTFFFR.

At 1–25 (MDNSNWTSVSHFVLLGISTHPEEQI) the chain is on the extracellular side. Residue N5 is glycosylated (N-linked (GlcNAc...) asparagine). Residues 26–49 (PLFLVFSLMYAINISGNLAIITLI) traverse the membrane as a helical segment. At 50-57 (LSAPRLHI) the chain is on the cytoplasmic side. A helical transmembrane segment spans residues 58–79 (PMYIFLSNLALTDICFTSTTVP). Residues 80-100 (KMLQIIFSPTKVISYTGCLAQ) are Extracellular-facing. C97 and C189 are oxidised to a cystine. Residues 101 to 120 (TYFFICFAVMENFILAVMAY) form a helical membrane-spanning segment. Over 121–139 (DRYIAICHPFHYTMILTRM) the chain is Cytoplasmic. The chain crosses the membrane as a helical span at residues 140 to 158 (LCVKMVVMCHALSHLHAML). Over 159-195 (HTFLIGQLIFCADNRIPHFFCDLYALMKISCTSTYLN) the chain is Extracellular. A helical membrane pass occupies residues 196–219 (TLMIHTEGAVVISGALAFITASYA). At 220–236 (CIILVVLRIPSAKGRWK) the chain is on the cytoplasmic side. The helical transmembrane segment at 237 to 259 (TFSTCGSHLTVVAIFYGTLSWVY) threads the bilayer. At 260–272 (FRPLSSYSVTKGR) the chain is on the extracellular side. Residues 273–292 (IITVVYTVVTPMLNPFIYSL) form a helical membrane-spanning segment. Residues 293 to 314 (RNGDVKGGFMKWMSRMQTFFFR) lie on the Cytoplasmic side of the membrane.

This sequence belongs to the G-protein coupled receptor 1 family.

The protein resides in the cell membrane. Odorant receptor. The sequence is that of Olfactory receptor 1Q1 (OR1Q1) from Homo sapiens (Human).